Reading from the N-terminus, the 516-residue chain is Cytochrome P450 1A2 (516 aa).

O-linked (GlcNAc) serine glycosylation occurs at Ser69. Phe226 is a substrate binding site. A heme-binding site is contributed by Cys458.

Belongs to the cytochrome P450 family. In terms of assembly, interacts with PGRMC1; the interaction requires PGRMC1 homodimerization. It depends on heme as a cofactor. Liver.

The protein localises to the endoplasmic reticulum membrane. The protein resides in the microsome membrane. The catalysed reaction is an organic molecule + reduced [NADPH--hemoprotein reductase] + O2 = an alcohol + oxidized [NADPH--hemoprotein reductase] + H2O + H(+). It carries out the reaction 17beta-estradiol + reduced [NADPH--hemoprotein reductase] + O2 = 2-hydroxy-17beta-estradiol + oxidized [NADPH--hemoprotein reductase] + H2O + H(+). The enzyme catalyses 17beta-estradiol + reduced [NADPH--hemoprotein reductase] + O2 = 4-hydroxy-17beta-estradiol + oxidized [NADPH--hemoprotein reductase] + H2O + H(+). It catalyses the reaction estrone + reduced [NADPH--hemoprotein reductase] + O2 = 2-hydroxyestrone + oxidized [NADPH--hemoprotein reductase] + H2O + H(+). The catalysed reaction is estrone + reduced [NADPH--hemoprotein reductase] + O2 = 4-hydroxyestrone + oxidized [NADPH--hemoprotein reductase] + H2O + H(+). It carries out the reaction cholesterol + reduced [NADPH--hemoprotein reductase] + O2 = 25-hydroxycholesterol + oxidized [NADPH--hemoprotein reductase] + H2O + H(+). The enzyme catalyses all-trans-retinol + reduced [NADPH--hemoprotein reductase] + O2 = all-trans-retinal + oxidized [NADPH--hemoprotein reductase] + 2 H2O + H(+). It catalyses the reaction all-trans-retinal + reduced [NADPH--hemoprotein reductase] + O2 = all-trans-retinoate + oxidized [NADPH--hemoprotein reductase] + H2O + 2 H(+). The catalysed reaction is (5Z,8Z,11Z,14Z)-eicosatetraenoate + reduced [NADPH--hemoprotein reductase] + O2 = (14R,15S)-epoxy-(5Z,8Z,11Z)-eicosatrienoate + oxidized [NADPH--hemoprotein reductase] + H2O + H(+). It carries out the reaction (5Z,8Z,11Z,14Z)-eicosatetraenoate + reduced [NADPH--hemoprotein reductase] + O2 = (14S,15R)-epoxy-(5Z,8Z,11Z)-eicosatrienoate + oxidized [NADPH--hemoprotein reductase] + H2O + H(+). The enzyme catalyses (5Z,8Z,11Z,14Z,17Z)-eicosapentaenoate + reduced [NADPH--hemoprotein reductase] + O2 = (17R,18S)-epoxy-(5Z,8Z,11Z,14Z)-eicosatetraenoate + oxidized [NADPH--hemoprotein reductase] + H2O + H(+). It catalyses the reaction (4Z,7Z,10Z,13Z,16Z,19Z)-docosahexaenoate + reduced [NADPH--hemoprotein reductase] + O2 = (19R,20S)-epoxy-(4Z,7Z,10Z,13Z,16Z)-docosapentaenoate + oxidized [NADPH--hemoprotein reductase] + H2O + H(+). The catalysed reaction is (5S)-hydroperoxy-(6E,8Z,11Z,14Z)-eicosatetraenoate = 5-oxo-(6E,8Z,11Z,14Z)-eicosatetraenoate + H2O. It carries out the reaction (12S)-hydroperoxy-(5Z,8Z,10E,14Z)-eicosatetraenoate = 12-oxo-(5Z,8Z,10E,14Z)-eicosatetraenoate + H2O. The enzyme catalyses (15S)-hydroperoxy-(5Z,8Z,11Z,13E)-eicosatetraenoate = 15-oxo-(5Z,8Z,11Z,13E)-eicosatetraenoate + H2O. It catalyses the reaction (13S)-hydroperoxy-(9Z,11E)-octadecadienoate = 13-oxo-(9Z,11E)-octadecadienoate + H2O. The catalysed reaction is (5Z,8Z,11Z,14Z)-eicosatetraenoate + reduced [NADPH--hemoprotein reductase] + O2 = 13-hydroxy-(5Z,8Z,11Z,14Z)-eicosatetraenoate + oxidized [NADPH--hemoprotein reductase] + H2O + H(+). It carries out the reaction (5Z,8Z,11Z,14Z)-eicosatetraenoate + reduced [NADPH--hemoprotein reductase] + O2 = 19-hydroxy-(5Z,8Z,11Z,14Z)-eicosatetraenoate + oxidized [NADPH--hemoprotein reductase] + H2O + H(+). The enzyme catalyses (9Z,12Z)-octadecadienoate + reduced [NADPH--hemoprotein reductase] + O2 = 11-hydroxy-(9Z,12Z)-octadecadienoate + oxidized [NADPH--hemoprotein reductase] + H2O + H(+). It participates in cofactor metabolism; retinol metabolism. Its pathway is steroid metabolism; cholesterol metabolism. It functions in the pathway lipid metabolism; arachidonate metabolism. Its function is as follows. A cytochrome P450 monooxygenase involved in the metabolism of various endogenous substrates, including fatty acids, steroid hormones and vitamins. Mechanistically, uses molecular oxygen inserting one oxygen atom into a substrate, and reducing the second into a water molecule, with two electrons provided by NADPH via cytochrome P450 reductase (NADPH--hemoprotein reductase). Catalyzes the hydroxylation of carbon-hydrogen bonds. Exhibits high catalytic activity for the formation of hydroxyestrogens from estrone (E1) and 17beta-estradiol (E2), namely 2-hydroxy E1 and E2. Metabolizes cholesterol toward 25-hydroxycholesterol, a physiological regulator of cellular cholesterol homeostasis. May act as a major enzyme for all-trans retinoic acid biosynthesis in the liver. Catalyzes two successive oxidative transformation of all-trans retinol to all-trans retinal and then to the active form all-trans retinoic acid. Primarily catalyzes stereoselective epoxidation of the last double bond of polyunsaturated fatty acids (PUFA), displaying a strong preference for the (R,S) stereoisomer. Catalyzes bisallylic hydroxylation and omega-1 hydroxylation of PUFA. May also participate in eicosanoids metabolism by converting hydroperoxide species into oxo metabolites (lipoxygenase-like reaction, NADPH-independent). Plays a role in the oxidative metabolism of xenobiotics. Catalyzes the N-hydroxylation of heterocyclic amines and the O-deethylation of phenacetin. Metabolizes caffeine via N3-demethylation. The chain is Cytochrome P450 1A2 from Homo sapiens (Human).